Consider the following 257-residue polypeptide: Snake venom serine protease 2C (257 aa).

The signal sequence occupies residues 1–18; that stretch reads MVLIRVLANLLILQLSYA. Residues 19-24 constitute a propeptide that is removed on maturation; that stretch reads QKSSEL. Positions 25–248 constitute a Peptidase S1 domain; sequence VIGGHPCNIN…HLDWIKSIIA (224 aa). Intrachain disulfides connect cysteine 31-cysteine 162, cysteine 49-cysteine 65, cysteine 97-cysteine 255, cysteine 141-cysteine 209, cysteine 173-cysteine 188, and cysteine 199-cysteine 224. Residues histidine 64 and aspartate 109 each act as charge relay system in the active site. Asparagine 116, asparagine 120, and asparagine 121 each carry an N-linked (GlcNAc...) asparagine glycan. The Charge relay system role is filled by serine 203.

It belongs to the peptidase S1 family. Snake venom subfamily. In terms of assembly, monomer. As to expression, expressed by the venom gland.

It is found in the secreted. Snake venom serine protease that may act in the hemostasis system of the prey. This chain is Snake venom serine protease 2C (TLG2C), found in Craspedocephalus gramineus (Bamboo pit viper).